Here is a 491-residue protein sequence, read N- to C-terminus: Interferon regulatory factor 3 (491 aa).

Residues 12–116 (KLRFGPWLLN…DPHKVYAVAS (105 aa)) constitute a DNA-binding region (IRF tryptophan pentad repeat).

It belongs to the IRF family. In terms of tissue distribution, widely expressed with higher expression in lung, spleen and intestine.

The protein resides in the cytoplasm. The protein localises to the nucleus. Key transcriptional regulator of type I interferon (IFN)-dependent immune responses which plays a critical role in the innate immune response against DNA and RNA viruses. Regulates the transcription of type I IFN genes (IFN-alpha and IFN-beta) and IFN-stimulated genes (ISG) by binding to an interferon-stimulated response element (ISRE) in their promoters. May activate transcription by complex formation with other transcriptional factors, possibly members of the STAT family. Binds specifically to the IFN-stimulated response element (ISRE) but not to the IRF-1 binding site PRD-I. This chain is Interferon regulatory factor 3 (IRF3), found in Gallus gallus (Chicken).